The sequence spans 442 residues: Lipoyl synthase, apicoplast (442 aa).

Positions 1–23 (MRVLTPSLYIYAFFIFCVRFKCG) are cleaved as a signal peptide. Residues 104–154 (LGEHQLKGKRKESATNVEKEKKEKEQQEERLPVPKVGNKMPEKKPDWFHVP) form a disordered region. Residues 114–135 (KESATNVEKEKKEKEQQEERLP) are compositionally biased toward basic and acidic residues. Residues C177, C182, C188, C203, C207, C210, and S418 each coordinate [4Fe-4S] cluster. Positions 189–407 (WNIGTATIML…KEEGMKMGFK (219 aa)) constitute a Radical SAM core domain.

The protein belongs to the radical SAM superfamily. Lipoyl synthase family. Requires [4Fe-4S] cluster as cofactor.

The protein localises to the plastid. It is found in the apicoplast. The enzyme catalyses [[Fe-S] cluster scaffold protein carrying a second [4Fe-4S](2+) cluster] + N(6)-octanoyl-L-lysyl-[protein] + 2 oxidized [2Fe-2S]-[ferredoxin] + 2 S-adenosyl-L-methionine + 4 H(+) = [[Fe-S] cluster scaffold protein] + N(6)-[(R)-dihydrolipoyl]-L-lysyl-[protein] + 4 Fe(3+) + 2 hydrogen sulfide + 2 5'-deoxyadenosine + 2 L-methionine + 2 reduced [2Fe-2S]-[ferredoxin]. It participates in protein modification; protein lipoylation via endogenous pathway; protein N(6)-(lipoyl)lysine from octanoyl-[acyl-carrier-protein]: step 2/2. Functionally, catalyzes the radical-mediated insertion of two sulfur atoms into the C-6 and C-8 positions of the octanoyl moiety bound to the lipoyl domains of lipoate-dependent enzymes, thereby converting the octanoylated domains into lipoylated derivatives. This is Lipoyl synthase, apicoplast from Plasmodium knowlesi (strain H).